The chain runs to 391 residues: Oocyte zinc finger protein XlCOF7.2 (391 aa).

C2H2-type zinc fingers lie at residues 284-306 (FPCS…YRTH), 312-334 (YPCS…RRIH), 340-362 (SSCS…HRTH), and 368-391 (YSCS…RRTH).

This sequence belongs to the krueppel C2H2-type zinc-finger protein family.

Its subcellular location is the nucleus. Its function is as follows. May be involved in transcriptional regulation. In Xenopus laevis (African clawed frog), this protein is Oocyte zinc finger protein XlCOF7.2.